The primary structure comprises 497 residues: 3-octaprenyl-4-hydroxybenzoate carboxy-lyase (497 aa).

Asparagine 175 contacts Mn(2+). Prenylated FMN is bound by residues 178 to 180 (IYR), 192 to 194 (RWL), and 197 to 198 (RG). Residue glutamate 241 coordinates Mn(2+). Aspartate 290 acts as the Proton donor in catalysis.

The protein belongs to the UbiD family. As to quaternary structure, homohexamer. Prenylated FMN is required as a cofactor. Requires Mn(2+) as cofactor.

The protein localises to the cell membrane. It catalyses the reaction a 4-hydroxy-3-(all-trans-polyprenyl)benzoate + H(+) = a 2-(all-trans-polyprenyl)phenol + CO2. Its pathway is cofactor biosynthesis; ubiquinone biosynthesis. Catalyzes the decarboxylation of 3-octaprenyl-4-hydroxy benzoate to 2-octaprenylphenol, an intermediate step in ubiquinone biosynthesis. This chain is 3-octaprenyl-4-hydroxybenzoate carboxy-lyase, found in Shigella flexneri.